Consider the following 335-residue polypeptide: Acetyl-coenzyme A carboxylase carboxyl transferase subunit alpha (335 aa).

The region spanning 40–294 (QLETLAARRR…KEAIEKHLNA (255 aa)) is the CoA carboxyltransferase C-terminal domain.

It belongs to the AccA family. In terms of assembly, acetyl-CoA carboxylase is a heterohexamer composed of biotin carboxyl carrier protein (AccB), biotin carboxylase (AccC) and two subunits each of ACCase subunit alpha (AccA) and ACCase subunit beta (AccD).

It is found in the cytoplasm. The enzyme catalyses N(6)-carboxybiotinyl-L-lysyl-[protein] + acetyl-CoA = N(6)-biotinyl-L-lysyl-[protein] + malonyl-CoA. It participates in lipid metabolism; malonyl-CoA biosynthesis; malonyl-CoA from acetyl-CoA: step 1/1. In terms of biological role, component of the acetyl coenzyme A carboxylase (ACC) complex. First, biotin carboxylase catalyzes the carboxylation of biotin on its carrier protein (BCCP) and then the CO(2) group is transferred by the carboxyltransferase to acetyl-CoA to form malonyl-CoA. This is Acetyl-coenzyme A carboxylase carboxyl transferase subunit alpha from Prochlorococcus marinus (strain AS9601).